A 284-amino-acid chain; its full sequence is Tropomyosin (284 aa).

Residues 1–284 are a coiled coil; sequence MDAIKKKMQA…DMTFTELIGN (284 aa).

Belongs to the tropomyosin family. As to quaternary structure, homodimer.

Functionally, tropomyosin, in association with the troponin complex, plays a central role in the calcium dependent regulation of muscle contraction. The chain is Tropomyosin from Periplaneta fuliginosa (Smokybrown cockroach).